Consider the following 423-residue polypeptide: Calcium up-regulated protein A (423 aa).

Over residues 1–19 (MINIEDISKSSNESEEKQL) the composition is skewed to basic and acidic residues. Positions 1–27 (MINIEDISKSSNESEEKQLKSTSTSSK) are disordered. 2 Ricin B-type lectin domains span residues 27 to 147 (KPKY…WTTF) and 118 to 251 (QGNG…WGIN).

The protein belongs to the cup family.

It localises to the cytoplasm. The protein resides in the membrane. Its function is as follows. May play an important role in stabilizing and/or regulating the cell membrane during Ca(2+) stress or certain stages of development. The protein is Calcium up-regulated protein A (cupA) of Dictyostelium discoideum (Social amoeba).